The sequence spans 118 residues: UPF0102 protein lpg2994 (118 aa).

It belongs to the UPF0102 family.

In Legionella pneumophila subsp. pneumophila (strain Philadelphia 1 / ATCC 33152 / DSM 7513), this protein is UPF0102 protein lpg2994.